The primary structure comprises 160 residues: Serine-protein kinase RsbW (160 aa).

Belongs to the anti-sigma-factor family.

The enzyme catalyses L-seryl-[protein] + ATP = O-phospho-L-seryl-[protein] + ADP + H(+). It catalyses the reaction L-threonyl-[protein] + ATP = O-phospho-L-threonyl-[protein] + ADP + H(+). Its function is as follows. Negative regulator of sigma-B activity. Phosphorylates and inactivates its specific antagonist protein, RsbV. Upon phosphorylation of RsbV, RsbW is released and binds to sigma-B, thereby blocking its ability to form an RNA polymerase holoenzyme (E-sigma-B). The protein is Serine-protein kinase RsbW of Bacillus cereus (strain AH187).